A 602-amino-acid polypeptide reads, in one-letter code: Potassium-transporting ATPase potassium-binding subunit (602 aa).

10 helical membrane passes run 3-23 (ANNL…AVPV), 64-84 (QYAL…YALL), 135-155 (GLTV…LALI), 178-198 (LYVL…QGVI), 282-302 (FSNF…CLVF), 313-333 (VAVL…ETSA), 418-438 (GLYG…LMIG), 456-476 (VSIV…IAVL), 522-542 (WMTA…VLAI), and 565-585 (LFVV…YMPA).

It belongs to the KdpA family. The system is composed of three essential subunits: KdpA, KdpB and KdpC.

Its subcellular location is the cell inner membrane. In terms of biological role, part of the high-affinity ATP-driven potassium transport (or Kdp) system, which catalyzes the hydrolysis of ATP coupled with the electrogenic transport of potassium into the cytoplasm. This subunit binds the periplasmic potassium ions and delivers the ions to the membrane domain of KdpB through an intramembrane tunnel. This is Potassium-transporting ATPase potassium-binding subunit from Burkholderia mallei (strain ATCC 23344).